The following is an 825-amino-acid chain: MATSERALLRTRAASLLRGLGRSRTGARSLQFRAEKERQPCWSFPMGQKTKGSSNIASSYLLQQLMHRYQELDSDGDEDQGEGEAGSEESSESEMLNLEEEFDGVLREEAVAKALHHLGRSGSGTEQVYLNLTLSGCNLIDVSILCGYVHLQKLDLSANKIEDLSCVSCMPYLLELNASQNNLTTFFNFKPPKNLKKADFSHNQISEICDLSAYHALTKLILDGNEIEEISGLEMCNNLIHLSLANNKITTINGLNKLPIKILCLSNNQIEMITGLEDLKALQNLDLSHNQISSLQGLENHDLLEVINLEDNKIAELREIEYIKNLPILRVLNLLENPIQEKSEYWFFVIFMLLRLTELDQKKIKVEEKVSAVNKYDPPPEVVAAQDHLTHVVNSVMQPQRIFDSTLPSLDAPYPMLILAGPEACGKRELAHRLCRQFSTYFRYGACHTTRPPYFGEGDRVDYHFISQDVFDEMVNMGKFILTFSYGNHKYGLNRDTVEGIARDGLASCIHMEIEGVRSLKYSYFEPRYILVVPMNKEKYEGYLRRKGLFSRAEIEFAVSRVDLYIKINQNFPGYFDEVINADDLDVAYQKLSQLIREYLGLTEEPAKSLATTADVKTSHLKPEAHPTKYISSNMGDFLHSTDRNYLIKFWAKLSAKKTPAERDSIHRQHEAARQALMGRIRPDHTLLFQRGPVPAPLTSGLHYYTTLEELWKSFDLCEDYFKPPFGPYPEKSGKDSLVSMKCSLFRFCPWSKELPFQPPEGSISSHLGSGASDSETEETRKALPIQSFSHEKESHQHRQHSVPVISRPGSNVKPTLPPIPQGRR.

The disordered stretch occupies residues 73–96; the sequence is DSDGDEDQGEGEAGSEESSESEML. 9 LRR repeats span residues 129–149, 150–171, 172–193, 194–215, 216–237, 238–259, 260–280, 281–302, and 303–324; these read YLNLTLSGCNLIDVSILCGYV, HLQKLDLSANKIEDLSCVSCMP, YLLELNASQNNLTTFFNFKPPK, NLKKADFSHNQISEICDLSAYH, ALTKLILDGNEIEEISGLEMCN, NLIHLSLANNKITTINGLNKLP, IKILCLSNNQIEMITGLEDLK, ALQNLDLSHNQISSLQGLENHD, and LLEVINLEDNKIAELREIEYIK. The region spanning 337–375 is the LRRCT domain; sequence NPIQEKSEYWFFVIFMLLRLTELDQKKIKVEEKVSAVNK. Positions 414–597 constitute a Guanylate kinase-like domain; the sequence is YPMLILAGPE…AYQKLSQLIR (184 aa). 421–428 serves as a coordination point for ATP; that stretch reads GPEACGKR. A disordered region spans residues 760–825; sequence PEGSISSHLG…TLPPIPQGRR (66 aa). The segment covering 763 to 774 has biased composition (polar residues); that stretch reads SISSHLGSGASD. The span at 816–825 shows a compositional bias: pro residues; that stretch reads TLPPIPQGRR.

As to quaternary structure, interacts (via guanylate kinase-like domain) with RIMBP3 (via coiled-coil region). Interacts (via guanylate kinase-like domain) with HOOK2. Interacts (via LRRCT domain) with KLC3. Interacts with HOOK1 and HOOK3.

It localises to the cytoplasmic vesicle. Its subcellular location is the secretory vesicle. The protein localises to the acrosome. It is found in the cytoplasm. The protein resides in the cytoskeleton. It localises to the cilium basal body. In terms of biological role, involved in multiple aspects of sperm assembly including acrosome attachment, shaping of the sperm head and in the early aspects of axoneme development. Not essential for primary cilium biogenesis. The sequence is that of Leucine-rich repeat and guanylate kinase domain-containing protein (LRGUK) from Homo sapiens (Human).